Consider the following 142-residue polypeptide: Large ribosomal subunit protein uL16 (142 aa).

The protein belongs to the universal ribosomal protein uL16 family. Part of the 50S ribosomal subunit.

Functionally, binds 23S rRNA and is also seen to make contacts with the A and possibly P site tRNAs. This Mycoplasmopsis pulmonis (strain UAB CTIP) (Mycoplasma pulmonis) protein is Large ribosomal subunit protein uL16.